Reading from the N-terminus, the 102-residue chain is MQKQKIRIRLKGYETNLLLDSCNKIIETATRTNSVTAGPIPLPTRRKIYCVLRSPHVNKDSREHFETRIHKRVIDIYEPNSTTIDSLMKLDLPAGIDIDIKI.

The protein belongs to the universal ribosomal protein uS10 family. In terms of assembly, part of the 30S ribosomal subunit.

It is found in the plastid. The protein resides in the chloroplast. Its function is as follows. Involved in the binding of tRNA to the ribosomes. This is Small ribosomal subunit protein uS10c from Guillardia theta (Cryptophyte).